The chain runs to 224 residues: 7-cyano-7-deazaguanine synthase (224 aa).

Leu10 to Val20 contributes to the ATP binding site. The Zn(2+) site is built by Cys189, Cys199, Cys202, and Cys205.

It belongs to the QueC family. Requires Zn(2+) as cofactor.

The catalysed reaction is 7-carboxy-7-deazaguanine + NH4(+) + ATP = 7-cyano-7-deazaguanine + ADP + phosphate + H2O + H(+). Its pathway is purine metabolism; 7-cyano-7-deazaguanine biosynthesis. Catalyzes the ATP-dependent conversion of 7-carboxy-7-deazaguanine (CDG) to 7-cyano-7-deazaguanine (preQ(0)). This Pseudomonas putida (strain ATCC 700007 / DSM 6899 / JCM 31910 / BCRC 17059 / LMG 24140 / F1) protein is 7-cyano-7-deazaguanine synthase.